Reading from the N-terminus, the 941-residue chain is Peroxisomal ATPase PEX6 (941 aa).

Residues 384-391 (GIPGCGKR) and 698-705 (GPPGTGKT) each bind ATP.

This sequence belongs to the AAA ATPase family. In terms of assembly, interacts with PEX1; forming the PEX1-PEX6 AAA ATPase complex, which is composed of a heterohexamer formed by a trimer of PEX1-PEX6 dimers. Interacts with APME9.

It is found in the cytoplasm. The protein resides in the cytosol. It localises to the peroxisome membrane. It carries out the reaction ATP + H2O = ADP + phosphate + H(+). Its function is as follows. Component of the PEX1-PEX6 AAA ATPase complex, a protein dislocase complex that mediates the ATP-dependent extraction of the PEX5 receptor from peroxisomal membranes, an essential step for PEX5 recycling. Specifically recognizes PEX5 monoubiquitinated at 'Cys-11', and pulls it out of the peroxisome lumen through the PEX2-PEX10-PEX12 retrotranslocation channel. Extraction by the PEX1-PEX6 AAA ATPase complex is accompanied by unfolding of the TPR repeats and release of bound cargo from PEX5. Required for jasmonate biosynthesis. Necessary for the developmental elimination of obsolete peroxisome matix proteins. The sequence is that of Peroxisomal ATPase PEX6 from Arabidopsis thaliana (Mouse-ear cress).